Here is a 234-residue protein sequence, read N- to C-terminus: tRNA (guanine-N(1)-)-methyltransferase (234 aa).

S-adenosyl-L-methionine is bound by residues Gly-115 and 135 to 140 (VGDYIL).

It belongs to the RNA methyltransferase TrmD family. Homodimer.

The protein resides in the cytoplasm. It carries out the reaction guanosine(37) in tRNA + S-adenosyl-L-methionine = N(1)-methylguanosine(37) in tRNA + S-adenosyl-L-homocysteine + H(+). Functionally, specifically methylates guanosine-37 in various tRNAs. This is tRNA (guanine-N(1)-)-methyltransferase from Rickettsia typhi (strain ATCC VR-144 / Wilmington).